The sequence spans 411 residues: Citrate synthase (411 aa).

Active-site residues include H304 and D363.

It belongs to the citrate synthase family.

It catalyses the reaction oxaloacetate + acetyl-CoA + H2O = citrate + CoA + H(+). Its pathway is carbohydrate metabolism; tricarboxylic acid cycle; isocitrate from oxaloacetate: step 1/2. This Rickettsia helvetica protein is Citrate synthase (gltA).